The following is a 1226-amino-acid chain: Methionine synthase (1226 aa).

The 321-residue stretch at Lys-7 to Val-327 folds into the Hcy-binding domain. Cys-249, Cys-312, and Cys-313 together coordinate Zn(2+). The 262-residue stretch at Phe-358–Glu-619 folds into the Pterin-binding domain. In terms of domain architecture, B12-binding N-terminal spans Ser-652 to Ala-746. Residues Glu-696, Gly-758–Asp-762, His-761, Ser-806, Thr-810, and Ala-862 contribute to the methylcob(III)alamin site. Residues Asn-748 to Glu-883 form the B12-binding domain. The AdoMet activation domain maps to Lys-899–Asn-1226. S-adenosyl-L-methionine contacts are provided by residues Asp-949, Arg-1137, and Tyr-1192 to Phe-1193.

The protein belongs to the vitamin-B12 dependent methionine synthase family. Requires methylcob(III)alamin as cofactor. Zn(2+) serves as cofactor.

It catalyses the reaction (6S)-5-methyl-5,6,7,8-tetrahydrofolate + L-homocysteine = (6S)-5,6,7,8-tetrahydrofolate + L-methionine. Its pathway is amino-acid biosynthesis; L-methionine biosynthesis via de novo pathway; L-methionine from L-homocysteine (MetH route): step 1/1. Its function is as follows. Catalyzes the transfer of a methyl group from methyl-cobalamin to homocysteine, yielding enzyme-bound cob(I)alamin and methionine. Subsequently, remethylates the cofactor using methyltetrahydrofolate. This is Methionine synthase (metH) from Aliivibrio fischeri (Vibrio fischeri).